The sequence spans 202 residues: Na(+)-translocating NADH-quinone reductase subunit E (202 aa).

6 consecutive transmembrane segments (helical) span residues 11 to 31, 35 to 55, 81 to 101, 114 to 134, 144 to 164, and 180 to 200; these read SVFI…FIAV, IETA…TVPA, FIAL…LEMV, GIFL…LFMI, VVYG…MAGV, and LGIT…FSGI.

Belongs to the NqrDE/RnfAE family. As to quaternary structure, composed of six subunits; NqrA, NqrB, NqrC, NqrD, NqrE and NqrF.

The protein localises to the cell inner membrane. It carries out the reaction a ubiquinone + n Na(+)(in) + NADH + H(+) = a ubiquinol + n Na(+)(out) + NAD(+). Its function is as follows. NQR complex catalyzes the reduction of ubiquinone-1 to ubiquinol by two successive reactions, coupled with the transport of Na(+) ions from the cytoplasm to the periplasm. NqrA to NqrE are probably involved in the second step, the conversion of ubisemiquinone to ubiquinol. The chain is Na(+)-translocating NADH-quinone reductase subunit E from Methylococcus capsulatus (strain ATCC 33009 / NCIMB 11132 / Bath).